The primary structure comprises 331 residues: Anthranilate phosphoribosyltransferase (331 aa).

5-phospho-alpha-D-ribose 1-diphosphate contacts are provided by residues G79, 82–83, S87, 89–92, 107–115, and S119; these read GD, NIST, and KHCNSSISG. G79 lines the anthranilate pocket. Residue S91 participates in Mg(2+) binding. Anthranilate is bound at residue N110. Position 165 (R165) interacts with anthranilate. The Mg(2+) site is built by D223 and E224.

Belongs to the anthranilate phosphoribosyltransferase family. In terms of assembly, homodimer. Mg(2+) serves as cofactor.

The enzyme catalyses N-(5-phospho-beta-D-ribosyl)anthranilate + diphosphate = 5-phospho-alpha-D-ribose 1-diphosphate + anthranilate. It functions in the pathway amino-acid biosynthesis; L-tryptophan biosynthesis; L-tryptophan from chorismate: step 2/5. Functionally, catalyzes the transfer of the phosphoribosyl group of 5-phosphorylribose-1-pyrophosphate (PRPP) to anthranilate to yield N-(5'-phosphoribosyl)-anthranilate (PRA). This Buchnera aphidicola subsp. Melaphis rhois protein is Anthranilate phosphoribosyltransferase.